Consider the following 273-residue polypeptide: 3-methyl-2-oxobutanoate hydroxymethyltransferase (273 aa).

Mg(2+) contacts are provided by Asp53 and Asp92. Residues 53 to 54, Asp92, and Lys120 each bind 3-methyl-2-oxobutanoate; that span reads DS. Glu122 contacts Mg(2+). The Proton acceptor role is filled by Glu189.

It belongs to the PanB family. As to quaternary structure, homodecamer; pentamer of dimers. Requires Mg(2+) as cofactor.

Its subcellular location is the cytoplasm. The enzyme catalyses 3-methyl-2-oxobutanoate + (6R)-5,10-methylene-5,6,7,8-tetrahydrofolate + H2O = 2-dehydropantoate + (6S)-5,6,7,8-tetrahydrofolate. It participates in cofactor biosynthesis; (R)-pantothenate biosynthesis; (R)-pantoate from 3-methyl-2-oxobutanoate: step 1/2. Functionally, catalyzes the reversible reaction in which hydroxymethyl group from 5,10-methylenetetrahydrofolate is transferred onto alpha-ketoisovalerate to form ketopantoate. This is 3-methyl-2-oxobutanoate hydroxymethyltransferase from Cupriavidus taiwanensis (strain DSM 17343 / BCRC 17206 / CCUG 44338 / CIP 107171 / LMG 19424 / R1) (Ralstonia taiwanensis (strain LMG 19424)).